We begin with the raw amino-acid sequence, 490 residues long: JNK-interacting protein 1 (490 aa).

Disordered stretches follow at residues 1 to 71 (MADS…DHEP) and 213 to 254 (EDSS…PVSQ). Residues 231–249 (GHSTAHSPNDFKSMSPQIT) are compositionally biased toward polar residues. Positions 271 to 332 (MLEATHRGLH…PSAYAVDLDY (62 aa)) constitute an SH3 domain. The PID domain occupies 344–479 (KERYLLGYLG…FQRFYQKFIE (136 aa)).

It belongs to the JIP scaffold family. In terms of assembly, forms homo- and heterooligomeric complexes. Binds Hep, a dual specificity protein kinase in the JNK pathway, but not its downstream target bsk. The C-terminal region interacts with the kinesin light chain protein, Klc, and the C-terminal PTY motif of amyloid-beta protein precursor-like protein, Appl. As to expression, expressed in the brain, CNS, PNS and cells posterior to the morphogenetic furrow in the eye imaginal disk of late embryos.

Its subcellular location is the cytoplasm. In terms of biological role, the JNK-interacting protein (JIP) group of scaffold proteins selectively mediates JNK signaling by aggregating specific components of the MAPK cascade to form a functional JNK signaling module. May function as a regulator of vesicle transport, through interactions with the JNK-signaling components and motor proteins. The protein is JNK-interacting protein 1 (Aplip1) of Drosophila melanogaster (Fruit fly).